Consider the following 473-residue polypeptide: MLEQVQKFLLSRAACEGSDSHTRYAELFHKLDVNKDGKVDILELQEGLKAMGMAVGKGAEEKIVEAGDTNKDGHLDFGEFMRYLEEHEKKMKIAFTSLDKNKDGKIESSEVMNSLKTLGINISLDHAEKILKSMDSDGTLTVDWNEWRDHFLFNPADNIQQIIRFWKHSTVLDIGDSLTIPDEFTEEEKKTGQWWKHLLAGGMAGAVSRTGTAPLDRLKVMMQVHGTKGNSNIITGLKQMVKEGGVRSLWRGNGVNVIKIAPETAMKFWAYEQYKKLFTSESGKLGTAERFIAGSLAGATAQTSIYPMEVLKTRLAVGKTGQYSGMFDCAKKIMQKEGILAFYKGYIPNILGIIPYAGIDLAIYETLKNYWLQNYAKDSANPGVLVLLGCGTVSSTCGQLASYPLALIRTRMQAQASIEGAPQLNMGGLFRKIVAKEGFFGLYTGIAPNFLKVLPAVSISYVVYEKMKIQLGI.

The segment at 1-173 is regulatory N-terminal domain; the sequence is MLEQVQKFLL…RFWKHSTVLD (173 aa). The Mitochondrial intermembrane portion of the chain corresponds to 1–197; it reads MLEQVQKFLL…EKKTGQWWKH (197 aa). EF-hand domains lie at 19 to 54, 55 to 88, 86 to 121, and 122 to 157; these read DSHT…MGMA, VGKG…EEHE, EHEK…LGIN, and ISLD…NPAD. Ca(2+) contacts are provided by Asp-32, Asn-34, Asp-36, Lys-38, Glu-43, Asp-68, Asn-70, Asp-72, His-74, Glu-79, Asp-99, Asn-101, Asp-103, Lys-105, Glu-110, Asp-135, Asp-137, Thr-139, Thr-141, and Glu-146. A linker region region spans residues 159–168; it reads IQQIIRFWKH. The segment at 174-473 is C-terminal transmembrane transporter domain; that stretch reads IGDSLTIPDE…YEKMKIQLGI (300 aa). Solcar repeat units follow at residues 192-277, 285-370, and 382-470; these read GQWW…YKKL, LGTA…LKNY, and PGVL…MKIQ. Residues 198–215 form a helical membrane-spanning segment; the sequence is LLAGGMAGAVSRTGTAPL. Residues 216 to 251 are Mitochondrial matrix-facing; the sequence is DRLKVMMQVHGTKGNSNIITGLKQMVKEGGVRSLWR. The chain crosses the membrane as a helical span at residues 252–271; sequence GNGVNVIKIAPETAMKFWAY. Residues 272-294 lie on the Mitochondrial intermembrane side of the membrane; the sequence is EQYKKLFTSESGKLGTAERFIAG. Residues 295 to 308 traverse the membrane as a helical segment; sequence SLAGATAQTSIYPM. Residues 309–344 are Mitochondrial matrix-facing; sequence EVLKTRLAVGKTGQYSGMFDCAKKIMQKEGILAFYK. A helical transmembrane segment spans residues 345–364; sequence GYIPNILGIIPYAGIDLAIY. The Mitochondrial intermembrane portion of the chain corresponds to 365–387; the sequence is ETLKNYWLQNYAKDSANPGVLVL. The chain crosses the membrane as a helical span at residues 388–405; sequence LGCGTVSSTCGQLASYPL. The Mitochondrial matrix segment spans residues 406–444; the sequence is ALIRTRMQAQASIEGAPQLNMGGLFRKIVAKEGFFGLYT. A helical transmembrane segment spans residues 445–464; it reads GIAPNFLKVLPAVSISYVVY. Residues 465 to 473 lie on the Mitochondrial intermembrane side of the membrane; sequence EKMKIQLGI.

The protein belongs to the mitochondrial carrier (TC 2.A.29) family. In terms of assembly, monomer.

It is found in the mitochondrion inner membrane. The enzyme catalyses Mg(2+)(out) + phosphate(in) + ATP(out) = Mg(2+)(in) + phosphate(out) + ATP(in). It carries out the reaction ADP(out) + phosphate(in) + H(+)(out) = ADP(in) + phosphate(out) + H(+)(in). It catalyses the reaction AMP(out) + phosphate(in) = AMP(in) + phosphate(out). The catalysed reaction is phosphate(in) + ATP(out) + 2 H(+)(out) = phosphate(out) + ATP(in) + 2 H(+)(in). The enzyme catalyses dADP(in) + ADP(out) = dADP(out) + ADP(in). It carries out the reaction Mg(2+)(in) + ADP(out) + ATP(in) + H(+)(out) = Mg(2+)(out) + ADP(in) + ATP(out) + H(+)(in). It catalyses the reaction ADP(out) + diphosphate(in) = ADP(in) + diphosphate(out). The catalysed reaction is dAMP(in) + ADP(out) + H(+)(out) = dAMP(out) + ADP(in) + H(+)(in). The enzyme catalyses 3'-AMP(in) + ADP(out) + H(+)(out) = 3'-AMP(out) + ADP(in) + H(+)(in). It carries out the reaction dAMP(out) + phosphate(in) = dAMP(in) + phosphate(out). It catalyses the reaction 3'-AMP(out) + phosphate(in) = 3'-AMP(in) + phosphate(out). The catalysed reaction is dADP(out) + phosphate(in) + H(+)(out) = dADP(in) + phosphate(out) + H(+)(in). Its activity is regulated as follows. Activated by an increase in cytosolic calcium levels that induce a conformational change of the N-terminal regulatory domain, uncapping the channel and allowing transport. Inhibited by bathophenanthroline, mersalyl, p-hydroxymercuribenzoate, bromcresol purple and tannic acid. Electroneutral antiporter that mediates the transport of adenyl nucleotides through the inner mitochondrial membrane. Originally identified as an ATP-magnesium/inorganic phosphate antiporter, it also acts as a broad specificity adenyl nucleotide antiporter. By regulating the mitochondrial matrix adenyl nucleotide pool could adapt to changing cellular energetic demands and indirectly regulate adenyl nucleotide-dependent metabolic pathways. This is Mitochondrial adenyl nucleotide antiporter SLC25A24-A (slc25a24-a) from Xenopus laevis (African clawed frog).